We begin with the raw amino-acid sequence, 154 residues long: Protein X (154 aa).

The interval 68 to 117 (PCALRFTSARRMETTVNAHGNLPKVLHKRTLGLSAMSTTDLEAYFKDCVF) is mitochondrial targeting sequence.

It belongs to the orthohepadnavirus protein X family. In terms of assembly, may form homodimer. May interact with host CEBPA, CFLAR, CREB1, DDB1, E4F1, HBXIP, HSPD1/HSP60, NFKBIA, POLR2E and SMAD4. Interacts with host SMC5-SMC6 complex and induces its degradation. Interacts with host TRPC4AP; leading to prevent ubiquitination of TRPC4AP. Interacts with host PLSCR1; this interaction promotes ubiquitination and degradation of HBx and impairs HBx-mediated cell proliferation. Post-translationally, a fraction may be phosphorylated in insect cells and HepG2 cells, a human hepatoblastoma cell line. Phosphorylated in vitro by host protein kinase C or mitogen-activated protein kinase. N-acetylated in insect cells.

It localises to the host cytoplasm. The protein localises to the host nucleus. The protein resides in the host mitochondrion. Functionally, multifunctional protein that plays a role in silencing host antiviral defenses and promoting viral transcription. Does not seem to be essential for HBV infection. May be directly involved in development of cirrhosis and liver cancer (hepatocellular carcinoma). Most of cytosolic activities involve modulation of cytosolic calcium. The effect on apoptosis is controversial depending on the cell types in which the studies have been conducted. May induce apoptosis by localizing in mitochondria and causing loss of mitochondrial membrane potential. May also modulate apoptosis by binding host CFLAR, a key regulator of the death-inducing signaling complex (DISC). Promotes viral transcription by using the host E3 ubiquitin ligase DDB1 to target the SMC5-SMC6 complex to proteasomal degradation. This host complex would otherwise bind to viral episomal DNA, and prevents its transcription. Moderately stimulates transcription of many different viral and cellular transcription elements. Promoters and enhancers stimulated by HBx contain DNA binding sites for NF-kappa-B, AP-1, AP-2, c-EBP, ATF/CREB, or the calcium-activated factor NF-AT. This chain is Protein X, found in Hepatitis B virus genotype B/C subtype adw (isolate Okinawa/pODW282/1998) (HBV-B).